A 345-amino-acid chain; its full sequence is Heat-inducible transcription repressor HrcA (345 aa).

Belongs to the HrcA family.

Functionally, negative regulator of class I heat shock genes (grpE-dnaK-dnaJ and groELS operons). Prevents heat-shock induction of these operons. The polypeptide is Heat-inducible transcription repressor HrcA (Tetragenococcus halophilus (Pediococcus halophilus)).